A 170-amino-acid polypeptide reads, in one-letter code: Peptide deformylase (170 aa).

Positions 94 and 136 each coordinate Fe cation. Glu-137 is an active-site residue. Position 140 (His-140) interacts with Fe cation.

This sequence belongs to the polypeptide deformylase family. Fe(2+) serves as cofactor.

The enzyme catalyses N-terminal N-formyl-L-methionyl-[peptide] + H2O = N-terminal L-methionyl-[peptide] + formate. In terms of biological role, removes the formyl group from the N-terminal Met of newly synthesized proteins. Requires at least a dipeptide for an efficient rate of reaction. N-terminal L-methionine is a prerequisite for activity but the enzyme has broad specificity at other positions. This chain is Peptide deformylase, found in Agrobacterium fabrum (strain C58 / ATCC 33970) (Agrobacterium tumefaciens (strain C58)).